A 232-amino-acid chain; its full sequence is Phosphatidylserine decarboxylase proenzyme (232 aa).

The active-site Schiff-base intermediate with substrate; via pyruvic acid is Ser190. A Pyruvic acid (Ser); by autocatalysis modification is found at Ser190.

The protein belongs to the phosphatidylserine decarboxylase family. PSD-A subfamily. Heterodimer of a large membrane-associated beta subunit and a small pyruvoyl-containing alpha subunit. Pyruvate serves as cofactor. In terms of processing, is synthesized initially as an inactive proenzyme. Formation of the active enzyme involves a self-maturation process in which the active site pyruvoyl group is generated from an internal serine residue via an autocatalytic post-translational modification. Two non-identical subunits are generated from the proenzyme in this reaction, and the pyruvate is formed at the N-terminus of the alpha chain, which is derived from the carboxyl end of the proenzyme. The post-translation cleavage follows an unusual pathway, termed non-hydrolytic serinolysis, in which the side chain hydroxyl group of the serine supplies its oxygen atom to form the C-terminus of the beta chain, while the remainder of the serine residue undergoes an oxidative deamination to produce ammonia and the pyruvoyl prosthetic group on the alpha chain.

It localises to the cell membrane. It carries out the reaction a 1,2-diacyl-sn-glycero-3-phospho-L-serine + H(+) = a 1,2-diacyl-sn-glycero-3-phosphoethanolamine + CO2. Its pathway is phospholipid metabolism; phosphatidylethanolamine biosynthesis; phosphatidylethanolamine from CDP-diacylglycerol: step 2/2. Catalyzes the formation of phosphatidylethanolamine (PtdEtn) from phosphatidylserine (PtdSer). This is Phosphatidylserine decarboxylase proenzyme from Bradyrhizobium sp. (strain ORS 278).